The following is a 1051-amino-acid chain: Ubiquitin-activating enzyme E1 1 (1051 aa).

A run of 2 repeats spans residues 56-194 and 453-605. The segment at 56 to 605 is 2 approximate repeats; that stretch reads GRETMKRLFG…GAKCNTQMVI (550 aa). ATP contacts are provided by residues A472, D498, R509, K522, and 570 to 571; that span reads DN. The active-site Glycyl thioester intermediate is the C626.

The protein belongs to the ubiquitin-activating E1 family. As to quaternary structure, monomer. The N-terminus is blocked.

It carries out the reaction ATP + ubiquitin + [E1 ubiquitin-activating enzyme]-L-cysteine = AMP + diphosphate + S-ubiquitinyl-[E1 ubiquitin-activating enzyme]-L-cysteine.. It functions in the pathway protein modification; protein ubiquitination. Functionally, activates ubiquitin by first adenylating its C-terminal glycine residue with ATP, and thereafter linking this residue to the side chain of a cysteine residue in E1, yielding a ubiquitin-E1 thioester and free AMP. The polypeptide is Ubiquitin-activating enzyme E1 1 (Triticum aestivum (Wheat)).